The following is a 244-amino-acid chain: DNA repair protein RecO (244 aa).

Belongs to the RecO family.

Its function is as follows. Involved in DNA repair and RecF pathway recombination. This chain is DNA repair protein RecO, found in Caldicellulosiruptor saccharolyticus (strain ATCC 43494 / DSM 8903 / Tp8T 6331).